Here is a 159-residue protein sequence, read N- to C-terminus: Small ribosomal subunit protein uS13 (159 aa).

Positions 136-159 are disordered; the sequence is QRTRSTGRSGATVGVTRKKTQAKK. The segment covering 138-149 has biased composition (low complexity); it reads TRSTGRSGATVG.

The protein belongs to the universal ribosomal protein uS13 family. In terms of assembly, part of the 30S ribosomal subunit. Forms a loose heterodimer with protein S19. Forms two bridges to the 50S subunit in the 70S ribosome.

Its function is as follows. Located at the top of the head of the 30S subunit, it contacts several helices of the 16S rRNA. In the 70S ribosome it contacts the 23S rRNA (bridge B1a) and protein L5 of the 50S subunit (bridge B1b), connecting the 2 subunits; these bridges are implicated in subunit movement. The sequence is that of Small ribosomal subunit protein uS13 from Methanothrix thermoacetophila (strain DSM 6194 / JCM 14653 / NBRC 101360 / PT) (Methanosaeta thermophila).